We begin with the raw amino-acid sequence, 567 residues long: Interleukin-1 receptor-like 1 (567 aa).

An N-terminal signal peptide occupies residues methionine 1–glycine 26. Ig-like C2-type domains follow at residues serine 27 to threonine 109 and proline 120 to threonine 203. Over serine 27–arginine 332 the chain is Extracellular. Cysteine 42 and cysteine 93 form a disulfide bridge. Asparagine 60, asparagine 101, asparagine 107, asparagine 146, asparagine 176, and asparagine 194 each carry an N-linked (GlcNAc...) asparagine glycan. 2 disulfide bridges follow: cysteine 117-cysteine 157 and cysteine 139-cysteine 187. Residues arginine 204–phenylalanine 216 are flexible linker. Positions proline 217–arginine 324 constitute an Ig-like C2-type 3 domain. N-linked (GlcNAc...) asparagine glycans are attached at residues asparagine 225, asparagine 259, and asparagine 278. Cystine bridges form between cysteine 240–cysteine 308 and cysteine 243–cysteine 287. Residue lysine 326 forms a Glycyl lysine isopeptide (Lys-Gly) (interchain with G-Cter in ubiquitin) linkage. A helical membrane pass occupies residues serine 333–leucine 355. The Cytoplasmic segment spans residues lysine 356 to phenylalanine 567. One can recognise a TIR domain in the interval lysine 380–methionine 540. Residue serine 442 is modified to Phosphoserine; by GSK3-beta. Residue glutamate 466 is part of the active site.

Belongs to the interleukin-1 receptor family. In terms of assembly, interacts with MYD88, IRAK1, IRAK4, and TRAF6. Bound to its ligand IL33, interacts with IL1RAP to form the minimal interleukin-33 signaling complex with a 1:1:1 stoichiometry. Interacts with KIT (bound to KITLG/SCF). A mast cell-specific KITLG/SCF-induced interleukin-33 signaling complex contains IL1RL1, IL1RAP, KIT and MYD88. Interacts with TMED1. Post-translationally, phosphorylated by GSK3B at Ser-442; leading to proteasomal degradation. In terms of processing, ubiquitinated at Lys-326 in a FBXL19-mediated manner; leading to proteasomal degradation. Ubiquitination by TRAF6 via 'Lys-27'-linked polyubiquitination and deubiquitination by USP38 serves as a critical regulatory mechanism for fine-tuning IL1RL1-mediated inflammatory response. Predominantly expressed in hematopoietic tissues, and in macrophage, erythroid, epithelial and fibroblast cell lines. Isoform A is expressed in brain astrocytes and microglia. Isoform B is expressed in brain endothelial cells.

It localises to the cell membrane. The protein localises to the secreted. It carries out the reaction NAD(+) + H2O = ADP-D-ribose + nicotinamide + H(+). In terms of biological role, receptor for interleukin-33 (IL-33) which plays crucial roles in innate and adaptive immunity, contributing to tissue homeostasis and responses to environmental stresses together with coreceptor IL1RAP. Its stimulation recruits MYD88, IRAK1, IRAK4, and TRAF6, followed by phosphorylation of MAPK3/ERK1 and/or MAPK1/ERK2, MAPK14, and MAPK8. Possibly involved in helper T-cell function. Upon tissue injury, induces UCP2-dependent mitochondrial rewiring that attenuates the generation of reactive oxygen species and preserves the integrity of Krebs cycle required for persistent production of itaconate and subsequent GATA3-dependent differentiation of inflammation-resolving alternatively activated macrophages. Inhibits IL-33 signaling. This chain is Interleukin-1 receptor-like 1 (Il1rl1), found in Mus musculus (Mouse).